Consider the following 1730-residue polypeptide: Meiosis regulator and mRNA stability factor 1 (1730 aa).

At Ser65 the chain carries Phosphoserine. In terms of domain architecture, NYN spans 352–489; the sequence is IGVFWDIENC…ALLHHANQLI (138 aa). The span at 655-668 shows a compositional bias: basic and acidic residues; that stretch reads MESKSGNRNSDHQQ. The segment at 655–722 is disordered; sequence MESKSGNRNS…VNSPVEKKKR (68 aa). Tyr698 is modified (phosphotyrosine). Residues 781 to 860 enclose the RRM domain; the sequence is VDIQVSNVDY…KKILVSLSTG (80 aa). 2 consecutive HTH OST-type domains span residues 865 to 939 and 993 to 1069; these read SLSL…SPLG and SLKV…HNKP. 2 positions are modified to phosphoserine: Ser1081 and Ser1083. HTH OST-type domains lie at 1089–1163, 1165–1241, 1249–1324, 1325–1400, 1401–1475, and 1476–1550; these read QLIQ…LTHR, QVKR…RKRE, RTKQ…TEVE, RFKA…INRK, SLRS…VKLT, and SLYL…LKND. The disordered stretch occupies residues 1667–1714; sequence VQKGNLSCDSSPSSPAASPAPPGPSSEAPRPLFSKDAVESPAKKQPKN. At Ser1684 the chain carries Phosphoserine.

Interacts with LIMK2. Predominantly present in oocytes and barely detectable in granulosa cells (at protein level).

Its subcellular location is the peroxisome. Functionally, essential regulator of oogenesis required for female meiotic progression to repress transposable elements and preventing their mobilization, which is essential for the germline integrity. Probably acts via some RNA metabolic process, equivalent to the piRNA system in males, which mediates the repression of transposable elements during meiosis by forming complexes composed of RNAs and governs the methylation and subsequent repression of transposons. Also required to protect from DNA double-strand breaks. This chain is Meiosis regulator and mRNA stability factor 1 (Marf1), found in Mus musculus (Mouse).